A 355-amino-acid chain; its full sequence is Small ribosomal subunit biogenesis GTPase RsgA 1 (355 aa).

The 160-residue stretch at G103 to F262 folds into the CP-type G domain. Residues N152–D155 and G204–S212 contribute to the GTP site. Zn(2+) is bound by residues C285, C290, H292, and C298.

Belongs to the TRAFAC class YlqF/YawG GTPase family. RsgA subfamily. As to quaternary structure, monomer. Associates with 30S ribosomal subunit, binds 16S rRNA. The cofactor is Zn(2+).

It localises to the cytoplasm. Its function is as follows. One of several proteins that assist in the late maturation steps of the functional core of the 30S ribosomal subunit. Helps release RbfA from mature subunits. May play a role in the assembly of ribosomal proteins into the subunit. Circularly permuted GTPase that catalyzes slow GTP hydrolysis, GTPase activity is stimulated by the 30S ribosomal subunit. This is Small ribosomal subunit biogenesis GTPase RsgA 1 from Bacteroides thetaiotaomicron (strain ATCC 29148 / DSM 2079 / JCM 5827 / CCUG 10774 / NCTC 10582 / VPI-5482 / E50).